We begin with the raw amino-acid sequence, 117 residues long: Pre-mRNA-splicing factor ini1 (117 aa).

Belongs to the PHF5 family.

It is found in the nucleus. Functionally, required for pre-mRNA splicing. The protein is Pre-mRNA-splicing factor ini1 (ini1) of Schizosaccharomyces pombe (strain 972 / ATCC 24843) (Fission yeast).